Consider the following 310-residue polypeptide: Ribonuclease Z (310 aa).

Zn(2+)-binding residues include H64, H66, D68, H69, H142, D213, and H271. Catalysis depends on D68, which acts as the Proton acceptor.

This sequence belongs to the RNase Z family. Homodimer. Zn(2+) serves as cofactor.

It catalyses the reaction Endonucleolytic cleavage of RNA, removing extra 3' nucleotides from tRNA precursor, generating 3' termini of tRNAs. A 3'-hydroxy group is left at the tRNA terminus and a 5'-phosphoryl group is left at the trailer molecule.. Functionally, zinc phosphodiesterase, which displays some tRNA 3'-processing endonuclease activity. Probably involved in tRNA maturation, by removing a 3'-trailer from precursor tRNA. This Treponema pallidum (strain Nichols) protein is Ribonuclease Z.